The primary structure comprises 333 residues: Tetraacyldisaccharide 4'-kinase (333 aa).

55-62 (TAGGNGKT) is an ATP binding site.

Belongs to the LpxK family.

The enzyme catalyses a lipid A disaccharide + ATP = a lipid IVA + ADP + H(+). The protein operates within glycolipid biosynthesis; lipid IV(A) biosynthesis; lipid IV(A) from (3R)-3-hydroxytetradecanoyl-[acyl-carrier-protein] and UDP-N-acetyl-alpha-D-glucosamine: step 6/6. Functionally, transfers the gamma-phosphate of ATP to the 4'-position of a tetraacyldisaccharide 1-phosphate intermediate (termed DS-1-P) to form tetraacyldisaccharide 1,4'-bis-phosphate (lipid IVA). This Proteus mirabilis (strain HI4320) protein is Tetraacyldisaccharide 4'-kinase.